Here is a 269-residue protein sequence, read N- to C-terminus: Ribosomal RNA small subunit methyltransferase A (269 aa).

The S-adenosyl-L-methionine site is built by I17, G42, E64, D89, and N109.

This sequence belongs to the class I-like SAM-binding methyltransferase superfamily. rRNA adenine N(6)-methyltransferase family. RsmA subfamily.

It localises to the cytoplasm. The enzyme catalyses adenosine(1518)/adenosine(1519) in 16S rRNA + 4 S-adenosyl-L-methionine = N(6)-dimethyladenosine(1518)/N(6)-dimethyladenosine(1519) in 16S rRNA + 4 S-adenosyl-L-homocysteine + 4 H(+). In terms of biological role, specifically dimethylates two adjacent adenosines (A1518 and A1519) in the loop of a conserved hairpin near the 3'-end of 16S rRNA in the 30S particle. May play a critical role in biogenesis of 30S subunits. The sequence is that of Ribosomal RNA small subunit methyltransferase A from Anaplasma phagocytophilum (strain HZ).